A 563-amino-acid polypeptide reads, in one-letter code: Pentatricopeptide repeat-containing protein At4g39620, chloroplastic (563 aa).

A chloroplast-targeting transit peptide spans 1-47; it reads MDYLLTSPSSLRFSDFISSIPKETDHKWLRFSVNLGDARRSTRTRIT. PPR repeat units follow at residues 132-166, 167-197, 207-241, 242-276, 277-311, 312-346, 347-381, 382-416, and 417-451; these read DNGVYSKLISVMGKKGQTRMAMWLFSEMKNSGCRP, DASVYNALITAHLHTRDKAKALEKVRGYLDK, NVVTYNILLRAFAQSGKVDQVNALFKDLDMSPVSP, DVYTFNGVMDAYGKNGMIKEMEAVLTRMRSNECKP, DIITFNVLIDSYGKKQEFEKMEQTFKSLMRSKEKP, TLPTFNSMIINYGKARMIDKAEWVFKKMNDMNYIP, SFITYECMIMMYGYCGSVSRAREIFEEVGESDRVL, KASTLNAMLEVYCRNGLYIEADKLFHNASAFRVHP, and DASTYKFLYKAYTKADMKEQVQILMKKMEKDGIVP. Disordered regions lie at residues 468–501 and 520–551; these read PGSGSENRKSTRSSRSRDSPKGRGGNQLTEFQDK and NLSGHDKGSRDESRKPSQEKQPLFASDQNNMM. The span at 520 to 537 shows a compositional bias: basic and acidic residues; it reads NLSGHDKGSRDESRKPSQ.

The protein belongs to the PPR family. P subfamily.

The protein resides in the plastid. Its subcellular location is the chloroplast. Its function is as follows. Essential for embryo development. This Arabidopsis thaliana (Mouse-ear cress) protein is Pentatricopeptide repeat-containing protein At4g39620, chloroplastic.